The sequence spans 353 residues: Glutamate 5-kinase (353 aa).

ATP is bound at residue Lys-8. The substrate site is built by Ser-47, Asp-134, and Asn-146. Residue 198–204 (TGGIRSK) participates in ATP binding. The PUA domain maps to 262–339 (AGKIYVNKGA…SDLKKILGYE (78 aa)).

This sequence belongs to the glutamate 5-kinase family.

The protein localises to the cytoplasm. The enzyme catalyses L-glutamate + ATP = L-glutamyl 5-phosphate + ADP. The protein operates within amino-acid biosynthesis; L-proline biosynthesis; L-glutamate 5-semialdehyde from L-glutamate: step 1/2. Catalyzes the transfer of a phosphate group to glutamate to form L-glutamate 5-phosphate. This chain is Glutamate 5-kinase, found in Thermotoga maritima (strain ATCC 43589 / DSM 3109 / JCM 10099 / NBRC 100826 / MSB8).